Here is a 173-residue protein sequence, read N- to C-terminus: Myosin light chain 5 (173 aa).

Positions 1-20 (MASRKTKKKEGGALRAQRAS) are disordered. 3 consecutive EF-hand domains span residues 30-65 (TQIQ…LGKT), 100-135 (DAEE…QADK), and 136-171 (MTAE…GEEK). Ca(2+)-binding residues include aspartate 43, asparagine 45, aspartate 47, and aspartate 54.

Myosin is a hexamer of 2 heavy chains and 4 light chains. As to expression, expressed in fetal skeletal muscle and retina.

This chain is Myosin light chain 5 (MYL5), found in Homo sapiens (Human).